The following is a 151-amino-acid chain: Large ribosomal subunit protein uL22 (151 aa).

Residues 1–18 (MARINYSINGDPETTSKA) show a composition bias toward polar residues. Residues 1–23 (MARINYSINGDPETTSKAMGSEL) form a disordered region.

Belongs to the universal ribosomal protein uL22 family. As to quaternary structure, part of the 50S ribosomal subunit.

In terms of biological role, this protein binds specifically to 23S rRNA. It makes multiple contacts with different domains of the 23S rRNA in the assembled 50S subunit and ribosome. Its function is as follows. The globular domain of the protein is located near the polypeptide exit tunnel on the outside of the subunit, while an extended beta-hairpin is found that lines the wall of the exit tunnel in the center of the 70S ribosome. The chain is Large ribosomal subunit protein uL22 from Methanosarcina acetivorans (strain ATCC 35395 / DSM 2834 / JCM 12185 / C2A).